Here is a 346-residue protein sequence, read N- to C-terminus: Peripherin-2 (346 aa).

At 1 to 24 the chain is on the cytoplasmic side; that stretch reads MALLKVKFDQKKRVKLAQGLWLMN. The chain crosses the membrane as a helical span at residues 25-43; sequence WLSVLAGIVIFSLGLFLKI. The Lumenal portion of the chain corresponds to 44 to 61; sequence ELRKRSDVMNNSESHFVP. N53 carries N-linked (GlcNAc...) asparagine glycosylation. A helical transmembrane segment spans residues 62 to 80; it reads NSLIVMGVLSCVFNSLAGK. Residues 81–99 are Cytoplasmic-facing; it reads ICYDALDPAKYAKWKPWLK. The helical transmembrane segment at 100 to 123 threads the bilayer; the sequence is PYLAVCVLFNIALFLVTLCCFLMR. Residues 124 to 264 are Lumenal-facing; that stretch reads GSLESTLAHG…LSYYSSLMNS (141 aa). N229 carries an N-linked (GlcNAc...) asparagine glycan. The helical transmembrane segment at 265 to 290 threads the bilayer; it reads MGAVTLLVWLFEVTITIGLRYLHTAL. Over 291 to 346 the chain is Cytoplasmic; sequence EGVSNPEDPECESEGWLLEKSVSETWKAFLESLKKLGKSNQVEAEGADAGQAPEAG. An interaction with MREG region spans residues 341–346; the sequence is QAPEAG.

The protein belongs to the PRPH2/ROM1 family. As to quaternary structure, homodimer; disulfide-linked. Forms a homotetramer. Forms a heterotetramer with ROM1. Homotetramer and heterotetramer core complexes go on to form higher order complexes by formation of intermolecular disulfide bonds. Interacts with MREG. Interacts with STX3. Interacts with SNAP25. Retina (photoreceptor). In rim region of ROS (rod outer segment) disks.

The protein resides in the membrane. The protein localises to the cell projection. Its subcellular location is the cilium. It is found in the photoreceptor outer segment. It localises to the photoreceptor inner segment. In terms of biological role, essential for retina photoreceptor outer segment disk morphogenesis, may also play a role with ROM1 in the maintenance of outer segment disk structure. Required for the maintenance of retinal outer nuclear layer thickness. Required for the correct development and organization of the photoreceptor inner segment. The protein is Peripherin-2 (PRPH2) of Canis lupus familiaris (Dog).